A 284-amino-acid polypeptide reads, in one-letter code: Nucleotide-binding protein NMB0738 (284 aa).

8-15 (GLSGSGKS) lines the ATP pocket. Residue 58-61 (DVRS) coordinates GTP.

The protein belongs to the RapZ-like family.

Displays ATPase and GTPase activities. The sequence is that of Nucleotide-binding protein NMB0738 from Neisseria meningitidis serogroup B (strain ATCC BAA-335 / MC58).